The sequence spans 331 residues: DNA-directed RNA polymerase subunit alpha (331 aa).

The interval 1–237 is alpha N-terminal domain (alpha-NTD); sequence MQSFEKEFLK…DQLSSFIDLK (237 aa). The tract at residues 251–331 is alpha C-terminal domain (alpha-CTD); that stretch reads FDPSLLNLVD…NWPPKHLSEQ (81 aa).

This sequence belongs to the RNA polymerase alpha chain family. As to quaternary structure, homodimer. The RNAP catalytic core consists of 2 alpha, 1 beta, 1 beta' and 1 omega subunit. When a sigma factor is associated with the core the holoenzyme is formed, which can initiate transcription.

It catalyses the reaction RNA(n) + a ribonucleoside 5'-triphosphate = RNA(n+1) + diphosphate. Functionally, DNA-dependent RNA polymerase catalyzes the transcription of DNA into RNA using the four ribonucleoside triphosphates as substrates. In Blochmanniella floridana, this protein is DNA-directed RNA polymerase subunit alpha.